A 110-amino-acid chain; its full sequence is Protein P2 (110 aa).

Over residues 72-82 (KLPTTSGSSSA) the composition is skewed to polar residues. Residues 72-110 (KLPTTSGSSSAGAIVPAGSNTQGQYKAPPKKGIKRKYPA) are disordered. Residues 99 to 110 (PPKKGIKRKYPA) show a composition bias toward basic residues.

The chain is Protein P2 from Oryza sativa (Rice).